We begin with the raw amino-acid sequence, 116 residues long: Small ribosomal subunit protein uS13m (116 aa).

The protein belongs to the universal ribosomal protein uS13 family. In terms of assembly, part of the small ribosomal subunit.

It localises to the mitochondrion. Its function is as follows. Located at the top of the head of the small subunit, it contacts several helices of the 18S rRNA. The sequence is that of Small ribosomal subunit protein uS13m (RPS13) from Daucus carota (Wild carrot).